We begin with the raw amino-acid sequence, 576 residues long: MAGUK p55 subfamily member 7 (576 aa).

2 consecutive L27 domains span residues 10–65 and 67–122; these read SDTG…KQSP and PILH…YDPV. One can recognise a PDZ domain in the interval 139–220; it reads IIRLVKNREP…AITFKIIPGS (82 aa). The SH3 domain maps to 228–298; the sequence is EGKMFIKALF…PSKHFQERRL (71 aa). Positions 289–383 are phospho-regulated basic and hydrophobic (PRBH) motif; it reads PSKHFQERRL…VGPVGVGLNE (95 aa). Positions 368–560 constitute a Guanylate kinase-like domain; that stretch reads YRLVVLVGPV…AFNELKTTFD (193 aa). Ser-409 carries the post-translational modification Phosphoserine.

The protein belongs to the MAGUK family. In terms of assembly, heterodimer; able to heterodimerize via its C-terminal L27 domain with LIN7A, LIN7B and LIN7C. Forms a tripartite complex composed of DLG1, MPP7 and LIN7 (LIN7A or LIN7C). Interacts with DLG1 via its N-terminal L27 domain. Interacts with PALS1 and PATJ. In terms of processing, phosphorylated by aPKC which promotes dissociation from the cell cortex.

The protein localises to the membrane. The protein resides in the lateral cell membrane. It is found in the cell junction. It localises to the tight junction. Its subcellular location is the adherens junction. The protein localises to the cytoplasm. The protein resides in the cell cortex. In terms of biological role, acts as an important adapter that promotes epithelial cell polarity and tight junction formation via its interaction with DLG1. Involved in the assembly of protein complexes at sites of cell-cell contact. This Homo sapiens (Human) protein is MAGUK p55 subfamily member 7 (MPP7).